A 398-amino-acid chain; its full sequence is Phytoene synthase, chloroplastic (398 aa).

The protein belongs to the phytoene/squalene synthase family. As to quaternary structure, monomer.

It localises to the plastid. The protein localises to the chloroplast. It catalyses the reaction 2 (2E,6E,10E)-geranylgeranyl diphosphate = 15-cis-phytoene + 2 diphosphate. Its pathway is carotenoid biosynthesis; phytoene biosynthesis; all-trans-phytoene from geranylgeranyl diphosphate: step 1/1. Functionally, catalyzes the reaction from prephytoene diphosphate to phytoene. The protein is Phytoene synthase, chloroplastic (PSY) of Daucus carota (Wild carrot).